A 190-amino-acid chain; its full sequence is B3 domain-containing protein At1g49475 (190 aa).

Residues 1-27 (MRNMHTNRRSPGPITSAATQRRLKPEP) form a disordered region. The segment at residues 33-125 (KFIKIILLSR…CFRVVIFDVS (93 aa)) is a DNA-binding region (TF-B3).

It is found in the nucleus. This chain is B3 domain-containing protein At1g49475, found in Arabidopsis thaliana (Mouse-ear cress).